The sequence spans 28 residues: Truncated protein OPG079 (28 aa).

The protein belongs to the orthopoxvirus OPG079 family. Homoomultimer (Potential). Interacts with the small subunit of ribonucleotide reductase. Interacts with host FAM111A; this interaction protomtes OPG079 degradation through autophagy.

The protein localises to the host cytoplasm. Its function is as follows. Plays an essential role in viral DNA replication. Binds to ssDNA with high affinity and localizes to cytoplasmic factories where nascent viral genomes accumulate. May disrupt loops, hairpins and other secondary structures present on ssDNA to reduce and eliminate pausing of viral DNA polymerase at specific sites during elongation. In Vaccinia virus (strain L-IVP) (VACV), this protein is Truncated protein OPG079 (OPG079).